The primary structure comprises 481 residues: Leukocyte immunoglobulin-like receptor subfamily A member 6 (481 aa).

An N-terminal signal peptide occupies residues methionine 1–alanine 23. Residues glycine 24–asparagine 447 lie on the Extracellular side of the membrane. Cysteine 49 and cysteine 98 are joined by a disulfide. The span at glutamine 59 to aspartate 70 shows a compositional bias: basic and acidic residues. Residues glutamine 59–lysine 78 form a disordered region. Asparagine 139 is a glycosylation site (N-linked (GlcNAc...) asparagine). 2 cysteine pairs are disulfide-bonded: cysteine 144-cysteine 196 and cysteine 245-cysteine 296. Ig-like C2-type domains are found at residues proline 225–asparagine 314 and aspartate 323–serine 408. N-linked (GlcNAc...) asparagine glycosylation is found at asparagine 301 and asparagine 340. A disulfide bond links cysteine 345 and cysteine 396. The interval serine 419 to histidine 439 is disordered. Residues leucine 448–alanine 468 form a helical membrane-spanning segment. Topologically, residues glutamine 469–arginine 481 are cytoplasmic.

The protein localises to the membrane. May act as receptor for class I MHC antigens. This Homo sapiens (Human) protein is Leukocyte immunoglobulin-like receptor subfamily A member 6 (LILRA6).